We begin with the raw amino-acid sequence, 262 residues long: Aconitate isomerase (262 aa).

An N-terminal signal peptide occupies residues 1 to 22 (MFPRLPTLALGALLLASTPLLA).

Monomer.

It catalyses the reaction trans-aconitate = cis-aconitate. Its activity is regulated as follows. Activated more than 1.5 fold by Ca(2+), Mg(2+), Mn(2+), Ni(2+), Fe(2+), DDT and 1,10-phenanthroline. Strongly inhibited by Ag(+) and Hg(+). Inhibited by addition of 20% (v/v) glycerol. No effect by addition of NADH or NADPH. Involved in assimilation of trans-aconitic acid. Preference for cis-aconitic acid is 14-fold higher than for trans-aconitic acid. Not active on intermediates of tricarboxylic acid (TCA) cycle including citric acid, succinic acid, fumaric acid, and 2-oxoglutaric acid or on other dicarboxilic acids including itaconic acid, formic acid, citraconic acid or maleic acid. This Pseudomonas sp protein is Aconitate isomerase.